The sequence spans 483 residues: MGNKKALKEEAFLGSAEEGADFDQAMFPVMETFEINDPMPKKRNWGSFCTAVMAIHLILLTAGTTLLTLKVLSLQKWILEKYLDNETLAAEDRSFFSLQLASPETHLVPRTPGLQALQVQLTQVRTSQEQLLQQVDNLTRNPELFRIKGERGSPGIPGLQGPPGIKGEAGLQGPMGAPREPGATGAPGPQGEKGSKGDKGLIGPKGEHGTKGDKGDLGLPGSKGDMGMKGVTGVMGPPGAQGNKGDPGKPGLPGLAGSPGVKGDQGQPGLQGVPGTPGAAGPSGAKGEPGHPGPPGPTGPQGISGSPGAAGLKGSKGDTGIQGQKGTKGESGVPGLAGRKGDTGNPGLAGPKGEPGRPGLKGDPGMKGSSGQQGQKGEKGEKGQSFKEVRIVGGTNRGRAEIFYNNAWGTICDDNWDNNDATVFCRMLGYSSGKGFTFGGGSGNIWLDDVNCQGTEDSLWNCRKNNWGSHNCNHNEDAGVECR.

Over 1–48 (MGNKKALKEEAFLGSAEEGADFDQAMFPVMETFEINDPMPKKRNWGSF) the chain is Cytoplasmic. Residues 49-69 (CTAVMAIHLILLTAGTTLLTL) traverse the membrane as a helical; Signal-anchor for type II membrane protein segment. The Extracellular portion of the chain corresponds to 70–483 (KVLSLQKWIL…HNEDAGVECR (414 aa)). Residues asparagine 85 and asparagine 137 are each glycosylated (N-linked (GlcNAc...) asparagine). Positions 146–386 (RIKGERGSPG…GEKGEKGQSF (241 aa)) are disordered. One can recognise a Collagen-like domain in the interval 148-383 (KGERGSPGIP…GQKGEKGEKG (236 aa)). A compositionally biased stretch (low complexity) spans 153-166 (SPGIPGLQGPPGIK). Residues 193–216 (KGSKGDKGLIGPKGEHGTKGDKGD) show a composition bias toward basic and acidic residues. Over residues 273-286 (VPGTPGAAGPSGAK) the composition is skewed to low complexity. Basic and acidic residues predominate over residues 376–386 (KGEKGEKGQSF). Residues 389-483 (VRIVGGTNRG…HNEDAGVECR (95 aa)) form the SRCR domain. 3 cysteine pairs are disulfide-bonded: cysteine 412–cysteine 472, cysteine 425–cysteine 482, and cysteine 452–cysteine 462.

Homotrimer; disulfide-linked. Trimers may assemble in larger oligomers thus resulting in the creation of a large surface capable of interacting with very large ligands. N-glycosylated. As to expression, expressed in alveolar macrophages, macrophages of lymph node sinues, and Kupffer cells in liver (at protein level).

The protein resides in the cell membrane. Functionally, pattern recognition receptor (PRR) which binds Gram-positive and Gram-negative bacteria. Also plays a role in binding of unopsonized particles by alveolar macrophages. Binds to the secretoglobin SCGB3A2. In Mesocricetus auratus (Golden hamster), this protein is Macrophage receptor MARCO (MARCO).